Consider the following 398-residue polypeptide: S-adenosylmethionine decarboxylase proenzyme (398 aa).

Catalysis depends on residues Glu18 and Glu21. Ser78 functions as the Schiff-base intermediate with substrate; via pyruvic acid in the catalytic mechanism. The residue at position 78 (Ser78) is a Pyruvic acid (Ser); by autocatalysis. Cys92 functions as the Proton donor; for catalytic activity in the catalytic mechanism. Active-site proton acceptor; for processing activity residues include Ser243 and His256.

This sequence belongs to the eukaryotic AdoMetDC family. It depends on pyruvate as a cofactor. Post-translationally, is synthesized initially as an inactive proenzyme. Formation of the active enzyme involves a self-maturation process in which the active site pyruvoyl group is generated from an internal serine residue via an autocatalytic post-translational modification. Two non-identical subunits are generated from the proenzyme in this reaction, and the pyruvate is formed at the N-terminus of the alpha chain, which is derived from the carboxyl end of the proenzyme. The post-translation cleavage follows an unusual pathway, termed non-hydrolytic serinolysis, in which the side chain hydroxyl group of the serine supplies its oxygen atom to form the C-terminus of the beta chain, while the remainder of the serine residue undergoes an oxidative deamination to produce ammonia and the pyruvoyl group blocking the N-terminus of the alpha chain.

It carries out the reaction S-adenosyl-L-methionine + H(+) = S-adenosyl 3-(methylsulfanyl)propylamine + CO2. The protein operates within amine and polyamine biosynthesis; S-adenosylmethioninamine biosynthesis; S-adenosylmethioninamine from S-adenosyl-L-methionine: step 1/1. The chain is S-adenosylmethionine decarboxylase proenzyme (SAMDC) from Oryza sativa subsp. japonica (Rice).